Reading from the N-terminus, the 274-residue chain is 3-methyl-2-oxobutanoate hydroxymethyltransferase (274 aa).

Mg(2+) contacts are provided by Asp-49 and Asp-88. 3-methyl-2-oxobutanoate contacts are provided by residues 49–50 (DS), Asp-88, and Lys-118. Glu-120 is a Mg(2+) binding site. The active-site Proton acceptor is Glu-187.

The protein belongs to the PanB family. Homodecamer; pentamer of dimers. Mg(2+) serves as cofactor.

The protein resides in the cytoplasm. The enzyme catalyses 3-methyl-2-oxobutanoate + (6R)-5,10-methylene-5,6,7,8-tetrahydrofolate + H2O = 2-dehydropantoate + (6S)-5,6,7,8-tetrahydrofolate. It functions in the pathway cofactor biosynthesis; (R)-pantothenate biosynthesis; (R)-pantoate from 3-methyl-2-oxobutanoate: step 1/2. In terms of biological role, catalyzes the reversible reaction in which hydroxymethyl group from 5,10-methylenetetrahydrofolate is transferred onto alpha-ketoisovalerate to form ketopantoate. This Rhodopseudomonas palustris (strain TIE-1) protein is 3-methyl-2-oxobutanoate hydroxymethyltransferase.